An 81-amino-acid chain; its full sequence is ATP synthase subunit c, chloroplastic (81 aa).

The next 2 helical transmembrane spans lie at 7–27 and 57–77; these read AASV…PGVG and LAFM…LLFA.

Belongs to the ATPase C chain family. In terms of assembly, F-type ATPases have 2 components, F(1) - the catalytic core - and F(0) - the membrane proton channel. F(1) has five subunits: alpha(3), beta(3), gamma(1), delta(1), epsilon(1). F(0) has four main subunits: a(1), b(1), b'(1) and c(10-14). The alpha and beta chains form an alternating ring which encloses part of the gamma chain. F(1) is attached to F(0) by a central stalk formed by the gamma and epsilon chains, while a peripheral stalk is formed by the delta, b and b' chains.

It is found in the plastid. It localises to the chloroplast thylakoid membrane. Functionally, f(1)F(0) ATP synthase produces ATP from ADP in the presence of a proton or sodium gradient. F-type ATPases consist of two structural domains, F(1) containing the extramembraneous catalytic core and F(0) containing the membrane proton channel, linked together by a central stalk and a peripheral stalk. During catalysis, ATP synthesis in the catalytic domain of F(1) is coupled via a rotary mechanism of the central stalk subunits to proton translocation. Key component of the F(0) channel; it plays a direct role in translocation across the membrane. A homomeric c-ring of between 10-14 subunits forms the central stalk rotor element with the F(1) delta and epsilon subunits. This is ATP synthase subunit c, chloroplastic from Arabis hirsuta (Hairy rock-cress).